Reading from the N-terminus, the 111-residue chain is Cyanovirin-N homolog (111 aa).

This sequence belongs to the cyanovirin-N family.

Mannose-binding lectin. The protein is Cyanovirin-N homolog of Neurospora crassa (strain ATCC 24698 / 74-OR23-1A / CBS 708.71 / DSM 1257 / FGSC 987).